Here is a 382-residue protein sequence, read N- to C-terminus: V-set and immunoglobulin domain-containing protein 1 (382 aa).

Residues M1–G21 form the signal peptide. The region spanning V22–S133 is the Ig-like V-type domain. The Extracellular portion of the chain corresponds to V22–G234. N32 carries an N-linked (GlcNAc...) asparagine glycan. Intrachain disulfides connect C43-C116 and C161-C211. The Ig-like C2-type domain occupies P140–T227. N-linked (GlcNAc...) asparagine glycosylation is found at N200 and N219. Residues I235–W255 form a helical membrane-spanning segment. Over F256 to P382 the chain is Cytoplasmic. The disordered stretch occupies residues K266 to P382. The span at K273–N285 shows a compositional bias: polar residues. Over residues Q286–A298 the composition is skewed to basic and acidic residues. Over residues E327–G341 the composition is skewed to pro residues.

The protein resides in the membrane. The polypeptide is V-set and immunoglobulin domain-containing protein 1 (VSIG1) (Bos taurus (Bovine)).